Here is a 564-residue protein sequence, read N- to C-terminus: uncharacterized protein (564 aa).

An N-terminal signal peptide occupies residues 1-21 (MRRIGAITALSLPVLLSLLYS). Cys-22 carries N-palmitoyl cysteine lipidation. Cys-22 is lipidated: S-diacylglycerol cysteine.

Its subcellular location is the cell membrane. This is an uncharacterized protein from Aquifex aeolicus (strain VF5).